The chain runs to 195 residues: Imidazoleglycerol-phosphate dehydratase (195 aa).

This sequence belongs to the imidazoleglycerol-phosphate dehydratase family.

It is found in the cytoplasm. It carries out the reaction D-erythro-1-(imidazol-4-yl)glycerol 3-phosphate = 3-(imidazol-4-yl)-2-oxopropyl phosphate + H2O. It participates in amino-acid biosynthesis; L-histidine biosynthesis; L-histidine from 5-phospho-alpha-D-ribose 1-diphosphate: step 6/9. The polypeptide is Imidazoleglycerol-phosphate dehydratase (Bacillus cytotoxicus (strain DSM 22905 / CIP 110041 / 391-98 / NVH 391-98)).